Reading from the N-terminus, the 389-residue chain is Chalcone synthase 3 (389 aa).

The active site involves Cys164.

Belongs to the thiolase-like superfamily. Chalcone/stilbene synthases family.

The catalysed reaction is (E)-4-coumaroyl-CoA + 3 malonyl-CoA + 3 H(+) = 2',4,4',6'-tetrahydroxychalcone + 3 CO2 + 4 CoA. It functions in the pathway secondary metabolite biosynthesis; flavonoid biosynthesis. The primary product of this enzyme is 4,2',4',6'-tetrahydroxychalcone (also termed naringenin-chalcone or chalcone) which can under specific conditions spontaneously isomerize into naringenin. The protein is Chalcone synthase 3 (CHS3) of Pisum sativum (Garden pea).